We begin with the raw amino-acid sequence, 2513 residues long: Polyprotein P1234 (2513 aa).

One can recognise an Alphavirus-like MT domain in the interval 28–259 (EPKQVTPNDH…ESRKLLQSWH (232 aa)). Residues 244–263 (GSTLYPESRKLLQSWHLPSV) are nsP1 membrane-binding. S-palmitoyl cysteine; by host attachment occurs at residues cysteine 417 and cysteine 419. One can recognise a (+)RNA virus helicase ATP-binding domain in the interval 690-842 (DLTSPPYHEF…HNICTQVYHK (153 aa)). An a ribonucleoside 5'-triphosphate-binding site is contributed by 721–728 (GVPGSGKS). A (+)RNA virus helicase C-terminal domain is found at 843 to 991 (SISRRCTLPV…IKEWEAEHAS (149 aa)). The region spanning 1004 to 1327 (DTFQNKANVC…NQLNAVYAGL (324 aa)) is the Peptidase C9 domain. A nucleolus localization signal region spans residues 1005–1024 (TFQNKANVCWAKCLVPILDT). Catalysis depends on cysteine 1013, which acts as the For cysteine protease nsP2 activity. The Nuclear export signal signature appears at 1058-1067 (TRIYGVDLDS). The active-site For cysteine protease nsP2 activity is histidine 1083. The Nuclear localization signal motif lies at 1182–1186 (PTKRV). Aspartate 1343, asparagine 1357, glycine 1365, glycine 1445, valine 1446, and tyrosine 1447 together coordinate ADP-D-ribose. Zn(2+) contacts are provided by cysteine 1595, cysteine 1597, cysteine 1620, and cysteine 1638. Short sequence motifs (FGDF; binding to host G3BP1) lie at residues 1851–1854 (FGDF) and 1869–1872 (FGDF). The region spanning 2267-2382 (DAVLETDIAS…HGVVSDALMA (116 aa)) is the RdRp catalytic domain.

Interacts with non-structural protein 3. Interacts with RNA-directed RNA polymerase nsP4. Interacts with protease nsP2. interacts with itself. In terms of assembly, interacts with mRNA-capping enzyme nsP1. Interacts with host DDX1. Interacts with host DDX3. Interacts (via C-terminus) with host G3BP1; this interaction inhibits the formation of host stress granules on viral mRNAs and the nsp3-G3BP1 complexes bind viral RNAs and probably orchestrate the assembly of viral replication complexes. Interacts (via C-terminus) with host G3BP2; this interaction inhibits the formation of host stress granules on viral mRNAs and the nsp3-G3BP2 complexes bind viral RNAs and probably orchestrate the assembly of viral replication complexes. As to quaternary structure, interacts with mRNA-capping enzyme nsP1. Interacts with protease nsP2. interacts with itself. Interacts with RNA-directed RNA polymerase nsP4. Interacts with mRNA-capping enzyme nsP1. Interacts with KPNA1/karyopherin-alpha1; this interaction probably allows the active transport of protease nsP2 into the host nucleus. It depends on Mg(2+) as a cofactor. Mn(2+) serves as cofactor. In terms of processing, specific enzymatic cleavages in vivo yield mature proteins. The processing of the polyprotein is temporally regulated. In early stages (1.7 hpi), P1234 is first cleaved in trans through its nsP2 protease activity, releasing P123 and nsP4, which associate to form the early replication complex. At the same time, P1234 is also cut at the nsP1/nsP2 site early in infection but with lower efficiency. After replication of the viral minus-strand RNAs (4 hpi), the polyproteins are cut at the nsP1/nsP2 and nsP2/nsP3 sites very efficiently, preventing accumulation of P123 and P1234 and allowing the formation of the late replication complex. NsP3/nsP4 site is not cleaved anymore and P34 is produced rather than nsP4. Specific enzymatic cleavages in vivo yield mature proteins. The processing of the polyprotein is temporally regulated. In early stages (1.7 hpi), P123 is cleaved at the nsP1/nsP2 site with low efficiency. After replication of the viral minus-strand RNAs (4 hpi), the polyproteins are cut at the nsP1/nsP2 and nsP2/nsP3 sites very efficiently, preventing accumulation of P123 and allowing the formation of the late replication complex. Post-translationally, palmitoylated by host palmitoyltransferases ZDHHC2 and ZDHHC19. In terms of processing, phosphorylated by host on serines and threonines. Ubiquitinated; targets the protein for rapid degradation via the ubiquitin system. Nsp4 is present in extremely low quantities due to low frequency of translation through the amber stop-codon and the degradation by the ubiquitin pathway.

The protein localises to the host cytoplasmic vesicle membrane. It localises to the host cell membrane. It is found in the host cell projection. The protein resides in the host filopodium. Its subcellular location is the host nucleus. The protein localises to the host cytoplasm. It carries out the reaction GTP + S-adenosyl-L-methionine = N(7)-methyl-GTP + S-adenosyl-L-homocysteine. The enzyme catalyses N(7)-methyl-GTP + L-histidyl-[protein] = N(tele)-(N(7)-methylguanosine 5'-phospho)-L-histidyl-[protein] + diphosphate. It catalyses the reaction N(tele)-(N(7)-methylguanosine 5'-phospho)-L-histidyl-[protein] + a 5'-end diphospho-(purine-ribonucleoside) in mRNA + H(+) = a 5'-end (N(7)-methyl 5'-triphosphoguanosine)-(purine-ribonucleoside) in mRNA + L-histidyl-[protein]. The catalysed reaction is a 5'-end triphospho-ribonucleoside in mRNA + H2O = a 5'-end diphospho-ribonucleoside in mRNA + phosphate + H(+). It carries out the reaction a ribonucleoside 5'-triphosphate + H2O = a ribonucleoside 5'-diphosphate + phosphate + H(+). The enzyme catalyses ATP + H2O = ADP + phosphate + H(+). It catalyses the reaction RNA(n) + a ribonucleoside 5'-triphosphate = RNA(n+1) + diphosphate. The catalysed reaction is 4-O-(ADP-D-ribosyl)-L-aspartyl-[protein] + H2O = L-aspartyl-[protein] + ADP-D-ribose + H(+). It carries out the reaction 5-O-(ADP-D-ribosyl)-L-glutamyl-[protein] + H2O = L-glutamyl-[protein] + ADP-D-ribose + H(+). The enzyme catalyses RNA(n) + ATP = RNA(n)-3'-adenine ribonucleotide + diphosphate. It catalyses the reaction ADP-alpha-D-ribose 1''-phosphate + H2O = ADP-D-ribose + phosphate. Inactive precursor of the viral replicase, which is activated by cleavages carried out by the viral protease nsP2. In terms of biological role, the early replication complex formed by the polyprotein P123 and nsP4 synthesizes minus-strand RNAs. As soon P123 is cleaved into mature proteins, the plus-strand RNAs synthesis begins. Functionally, cytoplasmic capping enzyme that catalyzes two virus-specific reactions: methyltransferase and nsP1 guanylyltransferase. mRNA-capping is necessary since all viral RNAs are synthesized in the cytoplasm, and host capping enzymes are restricted to the nucleus. The enzymatic reaction involves a covalent link between 7-methyl-GMP and nsP1, whereas eukaryotic capping enzymes form a covalent complex only with GMP. nsP1 capping consists in the following reactions: GTP is first methylated into 7-methyl-GMP and then is covalently linked to nsP1 to form the m7GMp-nsP1 complex from which 7-methyl-GMP complex is transferred to the mRNA to create the cap structure. NsP1 is also needed for the initiation of the minus-strand RNAs synthesis. Probably serves as a membrane anchor for the replication complex composed of nsP1-nsP4. Palmitoylated nsP1 is remodeling host cell cytoskeleton, and induces filopodium-like structure formation at the surface of the host cell. Its function is as follows. Multifunctional protein whose N-terminus is part of the RNA polymerase complex and displays NTPase, RNA triphosphatase and helicase activities. NTPase and RNA triphosphatase are involved in viral RNA capping and helicase keeps a check on the dsRNA replication intermediates. The C-terminus harbors a protease that specifically cleaves the polyproteins and releases the mature proteins. Required for the shutoff of minus-strand RNAs synthesis. Specifically inhibits the host IFN response by promoting the nuclear export of host STAT1. Also inhibits host transcription by inducing the rapid proteasome-dependent degradation of POLR2A, a catalytic subunit of the RNAPII complex. The resulting inhibition of cellular protein synthesis serves to ensure maximal viral gene expression and to evade host immune response. Seems to be essential for minus-strand RNAs and subgenomic 26S mRNAs synthesis. Displays mono-ADP-ribosylhydrolase activity. ADP-ribosylation is a post-translational modification that controls various processes of the host cell and the virus probably needs to revert it for optimal viral replication. Binds proteins of G3BP family and sequesters them into the viral RNA replication complexes thereby inhibiting the formation of host stress granules on viral mRNAs. The nsp3-G3BP complexes bind viral RNAs and probably orchestrate the assembly of viral replication complexes, thanks to the ability of G3BP family members to self-assemble and bind DNA. In terms of biological role, RNA dependent RNA polymerase. Replicates genomic and antigenomic RNA by recognizing replications specific signals. The early replication complex formed by the polyprotein P123 and nsP4 synthesizes minus-strand RNAs. The late replication complex composed of fully processed nsP1-nsP4 is responsible for the production of genomic and subgenomic plus-strand RNAs. The sequence is that of Polyprotein P1234 from Anopheles (Human).